Here is a 158-residue protein sequence, read N- to C-terminus: Regulator of sigma D (158 aa).

Belongs to the Rsd/AlgQ family. Interacts with RpoD.

The protein localises to the cytoplasm. Its function is as follows. Binds RpoD and negatively regulates RpoD-mediated transcription activation by preventing the interaction between the primary sigma factor RpoD with the catalytic core of the RNA polymerase and with promoter DNA. May be involved in replacement of the RNA polymerase sigma subunit from RpoD to RpoS during the transition from exponential growth to the stationary phase. The sequence is that of Regulator of sigma D from Escherichia coli (strain SMS-3-5 / SECEC).